A 146-amino-acid chain; its full sequence is Hemoglobin subunit beta (146 aa).

One can recognise a Globin domain in the interval 2-146 (HWTAEEKQLI…VAHALARKYH (145 aa)). Heme b is bound by residues H63 and H92.

Belongs to the globin family. Heterotetramer of two alpha chains and two beta chains. Red blood cells.

Its function is as follows. Involved in oxygen transport from the lung to the various peripheral tissues. The chain is Hemoglobin subunit beta (HBB) from Anas platyrhynchos platyrhynchos (Northern mallard).